We begin with the raw amino-acid sequence, 211 residues long: Molybdenum cofactor guanylyltransferase (211 aa).

Residues 12-14, K25, N53, D71, and D101 each bind GTP; that span reads LAG. Mg(2+) is bound at residue D101.

The protein belongs to the MobA family. Monomer. Mg(2+) serves as cofactor.

It is found in the cytoplasm. It carries out the reaction Mo-molybdopterin + GTP + H(+) = Mo-molybdopterin guanine dinucleotide + diphosphate. Transfers a GMP moiety from GTP to Mo-molybdopterin (Mo-MPT) cofactor (Moco or molybdenum cofactor) to form Mo-molybdopterin guanine dinucleotide (Mo-MGD) cofactor. In Acidovorax sp. (strain JS42), this protein is Molybdenum cofactor guanylyltransferase.